The sequence spans 386 residues: AT-hook motif nuclear-localized protein 8 (386 aa).

Disordered stretches follow at residues 1-175 (MDSR…LGGT) and 303-372 (KQSS…LHPH). Low complexity predominate over residues 54–70 (QQQSQTFHQQQQQQMDQ). Residues 101 to 110 (VKKKRGRPRK) are compositionally biased toward basic residues. The short motif at 102-110 (KKKRGRPRK) is the Bipartite nuclear localization signal element. The a.T hook 1 DNA-binding region spans 102-114 (KKKRGRPRKYTPD). Residues 126–135 (PLLSAASNSY) show a composition bias toward polar residues. The segment covering 136-147 (GEGGVGDSGGNG) has biased composition (gly residues). Positions 155-167 (KRNRGRPPGSSKK) form a DNA-binding region, a.T hook 2. The PPC domain occupies 174 to 316 (GTSGVGFTPH…VNIARGQNPE (143 aa)). Low complexity-rich tracts occupy residues 328-337 (GSVSQGPSSE) and 361-372 (QQQQQQQPLHPH).

It localises to the nucleus. In terms of biological role, transcription factor that specifically binds AT-rich DNA sequences related to the nuclear matrix attachment regions (MARs). The protein is AT-hook motif nuclear-localized protein 8 of Arabidopsis thaliana (Mouse-ear cress).